The sequence spans 62 residues: MTILFQLALAALVILSFVMVIGVPVAYASPQDWDRSKQLIFLGSGLWIALVLVVGVLNFFVV.

N-formylmethionine is present on methionine 1. The Lumenal portion of the chain corresponds to methionine 1–leucine 4. The helical transmembrane segment at phenylalanine 5–valine 25 threads the bilayer. At alanine 26–serine 36 the chain is on the cytoplasmic side. A helical membrane pass occupies residues lysine 37–asparagine 58. Residues phenylalanine 59–valine 62 lie on the Lumenal side of the membrane.

This sequence belongs to the PsbZ family. In terms of assembly, PSII is composed of 1 copy each of membrane proteins PsbA, PsbB, PsbC, PsbD, PsbE, PsbF, PsbH, PsbI, PsbJ, PsbK, PsbL, PsbM, PsbT, PsbX, PsbY, PsbZ, Psb30/Ycf12, peripheral proteins PsbO, CyanoQ (PsbQ), PsbU, PsbV and a large number of cofactors. It forms dimeric complexes. Part of a photosystem II (PSII) assembly intermediate complex PSII-I; crystallized from a strain deleted of psbJ, it forms monomeric PSII before addition of the oxygen evolving complex. PSII-I includes 3 assembly factors not found in mature PSII (Psb27, Psb28 and Psb34). PSII binds multiple chlorophylls, carotenoids and specific lipids. serves as cofactor.

Its subcellular location is the cellular thylakoid membrane. Functionally, may control the interaction of photosystem II (PSII) cores with the light-harvesting antenna, regulates electron flow through the 2 photosystem reaction centers. PSII is a light-driven water plastoquinone oxidoreductase, using light energy to abstract electrons from H(2)O, generating a proton gradient subsequently used for ATP formation. May also aid in binding of PsbK, Psb30/Ycf12 and the oxygen-evolving complex to PSII, at least in vitro. This chain is Photosystem II reaction center protein Z, found in Thermosynechococcus vestitus (strain NIES-2133 / IAM M-273 / BP-1).